The following is a 422-amino-acid chain: Probable biofilm formation methyltransferase WspC (422 aa).

One can recognise a CheR-type methyltransferase domain in the interval 1-264 (MNDRFERLLK…LSFVFRRTSE (264 aa)). S-adenosyl-L-methionine contacts are provided by residues Thr67, Arg71, Glu108, Asp132, 186 to 187 (NL), and 205 to 206 (RN). The interval 289–316 (ASIRPSPPPPAKPRQRLSSLVPPASGQP) is disordered. Residues 354–387 (ATVFYWLGLLSDVAGQEQEAQDFYRKALYLEPQH) form a TPR repeat.

In terms of assembly, monomer.

In terms of biological role, involved in biofilm formation. This Pseudomonas aeruginosa (strain ATCC 15692 / DSM 22644 / CIP 104116 / JCM 14847 / LMG 12228 / 1C / PRS 101 / PAO1) protein is Probable biofilm formation methyltransferase WspC (wspC).